The sequence spans 302 residues: MHIGILSRNRRLYSTRRLVEAAEARGHTARVVDTLRCYMNIASHRPSIHYKGEEIEPFDAIVPRIGASVTFYGCAVLRQFEMMSTYVLNDSVSITRSRDKLRSLQLLSRKGLGLPVTGFAHSPDDIPDLITMVKGAPLVIKLLEGTQGIGVVLAETNQAAESVIQAFMGMKANIMVQEYIKEAKGADVRCLVIGDKVVAAMKRQAAEGEFRSNLHRGGTASVIRITPEERSTAIRAAKAMGLRIAGVDLLRSNHGPVIMEVNSSPGLQGIETATGKDIAGQIIEYIEKNASTPRKAPPKPKG.

The ATP-grasp domain occupies 104-287; the sequence is LQLLSRKGLG…IAGQIIEYIE (184 aa). Residues lysine 141, 178 to 179, aspartate 187, and 211 to 213 contribute to the ATP site; these read EY and RSN. Residues aspartate 248, glutamate 260, and asparagine 262 each coordinate Mg(2+). Mn(2+)-binding residues include aspartate 248, glutamate 260, and asparagine 262.

This sequence belongs to the RimK family. Mg(2+) serves as cofactor. Requires Mn(2+) as cofactor.

This Chromohalobacter salexigens (strain ATCC BAA-138 / DSM 3043 / CIP 106854 / NCIMB 13768 / 1H11) protein is Probable alpha-L-glutamate ligase.